Reading from the N-terminus, the 298-residue chain is MSNRKDLLSVLDFTVNDVGNIIELAGQYLENKAANGRILENKTVINLFFEDSTRTLTSFEMAAKSLGANVVTLPVKSSSINKGEDLTDMIKTLNAMNPDYIVVRQKSSGIVNMLAKHVSCLLINAGDGSSEHPTQALADYFVISSHKKQIKNLKIVICGDILHSRVARSNIRLLKMFGAKICLVAPPTLICKHFPEVDSIYYSLIEGIKDADVIMLLRLQKERMNSGCFIPSNREYFYLYGLDSQKLLCAKSNAIVMHPGPINRGIEISSDITDHIILQQVEFGLAIRKAVLHYYRPC.

Carbamoyl phosphate contacts are provided by R54 and T55. Residue K82 participates in L-aspartate binding. Residues R104, H132, and Q135 each coordinate carbamoyl phosphate. R165 and R218 together coordinate L-aspartate. Positions 260 and 261 each coordinate carbamoyl phosphate.

It belongs to the aspartate/ornithine carbamoyltransferase superfamily. ATCase family. In terms of assembly, heterododecamer (2C3:3R2) of six catalytic PyrB chains organized as two trimers (C3), and six regulatory PyrI chains organized as three dimers (R2).

It catalyses the reaction carbamoyl phosphate + L-aspartate = N-carbamoyl-L-aspartate + phosphate + H(+). Its pathway is pyrimidine metabolism; UMP biosynthesis via de novo pathway; (S)-dihydroorotate from bicarbonate: step 2/3. Its function is as follows. Catalyzes the condensation of carbamoyl phosphate and aspartate to form carbamoyl aspartate and inorganic phosphate, the committed step in the de novo pyrimidine nucleotide biosynthesis pathway. This chain is Aspartate carbamoyltransferase catalytic subunit, found in Wolbachia sp. subsp. Brugia malayi (strain TRS).